A 319-amino-acid chain; its full sequence is HTH-type transcriptional regulator YidZ (319 aa).

An HTH lysR-type domain is found at 8 to 65; it reads LDLNLLLCLQLLMQERSVTKAAKRMNVTPSAVSKSLAKLRAWFDDPLFVNTPLGLAPT. The segment at residues 25–44 is a DNA-binding region (H-T-H motif); the sequence is VTKAAKRMNVTPSAVSKSLA.

Belongs to the LysR transcriptional regulatory family.

Involved in anaerobic NO protection. The sequence is that of HTH-type transcriptional regulator YidZ from Salmonella heidelberg (strain SL476).